The sequence spans 299 residues: Large ribosomal subunit protein uL18 (299 aa).

This sequence belongs to the universal ribosomal protein uL18 family. Component of the large ribosomal subunit (LSU). Interacts with Fmr1 to form the RNA-induced silencing complex (RISC), a ribonucleoprotein (RNP) complex involved in translation regulation, other components of the complex are Rm62, RpL11, AGO2 and Dcr-1.

Its subcellular location is the cytoplasm. It localises to the nucleus. Functionally, component of the ribosome, a large ribonucleoprotein complex responsible for the synthesis of proteins in the cell. The small ribosomal subunit (SSU) binds messenger RNAs (mRNAs) and translates the encoded message by selecting cognate aminoacyl-transfer RNA (tRNA) molecules. The large subunit (LSU) contains the ribosomal catalytic site termed the peptidyl transferase center (PTC), which catalyzes the formation of peptide bonds, thereby polymerizing the amino acids delivered by tRNAs into a polypeptide chain. The nascent polypeptides leave the ribosome through a tunnel in the LSU and interact with protein factors that function in enzymatic processing, targeting, and the membrane insertion of nascent chains at the exit of the ribosomal tunnel. This chain is Large ribosomal subunit protein uL18 (RpL5), found in Drosophila melanogaster (Fruit fly).